The sequence spans 207 residues: Outer-membrane lipoprotein carrier protein (207 aa).

A signal peptide spans 1-23; sequence MMKPHNLFQFLAVCSLTVAVASA.

This sequence belongs to the LolA family. As to quaternary structure, monomer.

It localises to the periplasm. Its function is as follows. Participates in the translocation of lipoproteins from the inner membrane to the outer membrane. Only forms a complex with a lipoprotein if the residue after the N-terminal Cys is not an aspartate (The Asp acts as a targeting signal to indicate that the lipoprotein should stay in the inner membrane). The protein is Outer-membrane lipoprotein carrier protein of Neisseria gonorrhoeae (strain ATCC 700825 / FA 1090).